The following is a 181-amino-acid chain: Large ribosomal subunit protein uL5 (181 aa).

This sequence belongs to the universal ribosomal protein uL5 family. Part of the 50S ribosomal subunit; part of the 5S rRNA/L5/L18/L25 subcomplex. Contacts the 5S rRNA and the P site tRNA. Forms a bridge to the 30S subunit in the 70S ribosome.

Functionally, this is one of the proteins that bind and probably mediate the attachment of the 5S RNA into the large ribosomal subunit, where it forms part of the central protuberance. In the 70S ribosome it contacts protein S13 of the 30S subunit (bridge B1b), connecting the 2 subunits; this bridge is implicated in subunit movement. Contacts the P site tRNA; the 5S rRNA and some of its associated proteins might help stabilize positioning of ribosome-bound tRNAs. The polypeptide is Large ribosomal subunit protein uL5 (Helicobacter hepaticus (strain ATCC 51449 / 3B1)).